A 329-amino-acid polypeptide reads, in one-letter code: MVVVNKTNLLLLLLSLCLTLDLSSAQLRRNFYAGSCPNVEQIVRNAVQKKVQQTFTTIPATLRLYFHDCFVNGCDASVMIASTNNNKAEKDHEENLSLAGDGFDTVIKAKEALDAVPNCRNKVSCADILTMATRDVVNLAGGPQYDVELGRLDGLSSTAASVGGKLPHPTDDVNKLTSLFAKNGLSLNDMIALSGAHTLGFAHCTKVFNRIYTFNKTTKVDPTVNKDYVTELKASCPRNIDPRVAINMDPTTPRQFDNVYYKNLQQGKGLFTSDQVLFTDRRSKPTVDLWANNGQLFNQAFINSMIKLGRVGVKTGSNGNIRRDCGAFN.

The signal sequence occupies residues 1–25 (MVVVNKTNLLLLLLSLCLTLDLSSA). 4 cysteine pairs are disulfide-bonded: Cys36-Cys119, Cys69-Cys74, Cys125-Cys325, and Cys204-Cys236. His67 serves as the catalytic Proton acceptor. The Ca(2+) site is built by Asp68, Val71, Gly73, Asp75, and Ser77. Pro167 serves as a coordination point for substrate. Residue His197 coordinates heme b. Thr198 lines the Ca(2+) pocket. A glycan (N-linked (GlcNAc...) asparagine) is linked at Asn215. Residues Asp249, Thr252, and Asp257 each contribute to the Ca(2+) site.

It belongs to the peroxidase family. Classical plant (class III) peroxidase subfamily. Requires heme b as cofactor. The cofactor is Ca(2+). In terms of tissue distribution, expressed in roots and leaves.

Its subcellular location is the secreted. The enzyme catalyses 2 a phenolic donor + H2O2 = 2 a phenolic radical donor + 2 H2O. Its function is as follows. Removal of H(2)O(2), oxidation of toxic reductants, biosynthesis and degradation of lignin, suberization, auxin catabolism, response to environmental stresses such as wounding, pathogen attack and oxidative stress. These functions might be dependent on each isozyme/isoform in each plant tissue. In terms of biological role, exhibits a Ca(2+)-pectate binding affinity which could be interpreted in vivo as a specificity to interact with the pectic structure of the cell wall. This chain is Peroxidase 50 (PER50), found in Arabidopsis thaliana (Mouse-ear cress).